Here is a 578-residue protein sequence, read N- to C-terminus: Isocitrate dehydrogenase kinase/phosphatase (578 aa).

Residues 315-321 (APGIRGM) and lysine 336 each bind ATP. Aspartate 371 is an active-site residue.

The protein belongs to the AceK family.

The protein resides in the cytoplasm. The enzyme catalyses L-seryl-[isocitrate dehydrogenase] + ATP = O-phospho-L-seryl-[isocitrate dehydrogenase] + ADP + H(+). In terms of biological role, bifunctional enzyme which can phosphorylate or dephosphorylate isocitrate dehydrogenase (IDH) on a specific serine residue. This is a regulatory mechanism which enables bacteria to bypass the Krebs cycle via the glyoxylate shunt in response to the source of carbon. When bacteria are grown on glucose, IDH is fully active and unphosphorylated, but when grown on acetate or ethanol, the activity of IDH declines drastically concomitant with its phosphorylation. The chain is Isocitrate dehydrogenase kinase/phosphatase from Shigella boydii serotype 18 (strain CDC 3083-94 / BS512).